The primary structure comprises 228 residues: 2,3-bisphosphoglycerate-dependent phosphoglycerate mutase (228 aa).

Substrate contacts are provided by residues 8 to 15 (RHGQSVWN), 21 to 22 (TG), Arg-60, 87 to 90 (ERHY), Lys-98, 114 to 115 (RR), and 183 to 184 (GN). Catalysis depends on His-9, which acts as the Tele-phosphohistidine intermediate. Residue Glu-87 is the Proton donor/acceptor of the active site.

The protein belongs to the phosphoglycerate mutase family. BPG-dependent PGAM subfamily.

It carries out the reaction (2R)-2-phosphoglycerate = (2R)-3-phosphoglycerate. Its pathway is carbohydrate degradation; glycolysis; pyruvate from D-glyceraldehyde 3-phosphate: step 3/5. Catalyzes the interconversion of 2-phosphoglycerate and 3-phosphoglycerate. The polypeptide is 2,3-bisphosphoglycerate-dependent phosphoglycerate mutase (Staphylococcus saprophyticus subsp. saprophyticus (strain ATCC 15305 / DSM 20229 / NCIMB 8711 / NCTC 7292 / S-41)).